Reading from the N-terminus, the 118-residue chain is Ribonuclease P protein component (118 aa).

It belongs to the RnpA family. Consists of a catalytic RNA component (M1 or rnpB) and a protein subunit.

The catalysed reaction is Endonucleolytic cleavage of RNA, removing 5'-extranucleotides from tRNA precursor.. Its function is as follows. RNaseP catalyzes the removal of the 5'-leader sequence from pre-tRNA to produce the mature 5'-terminus. It can also cleave other RNA substrates such as 4.5S RNA. The protein component plays an auxiliary but essential role in vivo by binding to the 5'-leader sequence and broadening the substrate specificity of the ribozyme. The protein is Ribonuclease P protein component of Levilactobacillus brevis (strain ATCC 367 / BCRC 12310 / CIP 105137 / JCM 1170 / LMG 11437 / NCIMB 947 / NCTC 947) (Lactobacillus brevis).